The primary structure comprises 363 residues: NAD(P)H-quinone oxidoreductase subunit 1, chloroplastic (363 aa).

6 consecutive transmembrane segments (helical) span residues 30–50 (LVPI…IVWL), 98–118 (FSIG…VIPF), 127–147 (LSIG…GLLM), 248–268 (YSGI…LVSS), 300–320 (VFGT…FLFI), and 336–356 (LLNL…LLTT).

The protein belongs to the complex I subunit 1 family. NDH is composed of at least 16 different subunits, 5 of which are encoded in the nucleus.

It localises to the plastid. The protein localises to the chloroplast thylakoid membrane. The enzyme catalyses a plastoquinone + NADH + (n+1) H(+)(in) = a plastoquinol + NAD(+) + n H(+)(out). The catalysed reaction is a plastoquinone + NADPH + (n+1) H(+)(in) = a plastoquinol + NADP(+) + n H(+)(out). NDH shuttles electrons from NAD(P)H:plastoquinone, via FMN and iron-sulfur (Fe-S) centers, to quinones in the photosynthetic chain and possibly in a chloroplast respiratory chain. The immediate electron acceptor for the enzyme in this species is believed to be plastoquinone. Couples the redox reaction to proton translocation, and thus conserves the redox energy in a proton gradient. In Drimys granadensis, this protein is NAD(P)H-quinone oxidoreductase subunit 1, chloroplastic.